We begin with the raw amino-acid sequence, 1230 residues long: Formin-like protein 14 (1230 aa).

The 194-residue stretch at 1–194 (MSLLSRFFYK…QYVARRNINS (194 aa)) folds into the Phosphatase tensin-type domain. The active-site Phosphocysteine intermediate is the Cys-127. Residues 200-339 (ERALSLDCVI…FRAEVLFGEV (140 aa)) form the C2 tensin-type domain. 3 disordered regions span residues 412 to 432 (FNSPDSEEETNTSSAADSSDE), 460 to 822 (HESS…LKPL), and 1187 to 1230 (ENEK…RHRT). Residues 484-496 (DNPLNLPSDPPSS) show a composition bias toward low complexity. 4 stretches are compositionally biased toward pro residues: residues 503–514 (LPPPPPPPPPPL), 524–535 (SQPPPPPPPPPL), 545–556 (SQPPPPPPPPPL), and 566–575 (SQPPPPPPLP). A compositionally biased stretch (polar residues) spans 579–591 (NRDPLTTLHQPIN). Composition is skewed to pro residues over residues 592-630 (KTPPPPPPPPPPLPSRSIPPPLAQPPPPRPPPPPPPPPS), 637-649 (PSAPPPPPPPPPS), 660-672 (QPPPPPPPPPPTR), 679-688 (APPPPPPPPT), 699-711 (PSTPPPPPPPPPK), 718-728 (PKPPAPPPLPP), and 735-766 (APPPPPPPPLSKTPAPPPPPLSKTPVPPPPPG). Residues 809–1207 (VPTAAPKKTA…KLEKEAIKEK (399 aa)) enclose the FH2 domain. Over residues 1187–1215 (ENEKQAEAEKKKLEKEAIKEKSATKKDGV) the composition is skewed to basic and acidic residues.

Belongs to the formin-like family. Class-II subfamily.

In Arabidopsis thaliana (Mouse-ear cress), this protein is Formin-like protein 14 (FH14).